Reading from the N-terminus, the 319-residue chain is MKPENKLPVLDLISAEMKTVVNTLQPDLPSWPATGTIAEQRQYYTLERRFWNAGAPEMATRAYMVPTKYGQVETRLFCPQPDSPATLFYLHGGGFILGNLDTHDRIMRLLASYSQCTVIGIDYTLSPEARFPQAIEEIVAACCYFHQQAEDYQINMSRIGFAGDSAGAMLALASALWLRDKQIDCGKIAGVLLWYGLYGLRDSVTRRLLGGVWDGLTQQDLQMYEEAYLSNDADRESPYYCLFNNDLTREVPPCFIAGAEFDPLLDDSRLLYQTLAAHQQPCEFKLYPGTLHAFLHYSRMMKTADEALRDGAQFFTAQL.

The Involved in the stabilization of the negatively charged intermediate by the formation of the oxyanion hole motif lies at 91 to 93; the sequence is HGG. Active-site residues include serine 165, aspartate 262, and histidine 292.

Belongs to the 'GDXG' lipolytic enzyme family. Homodimer. Interacts with MalT and MelA.

It localises to the cytoplasm. Functionally, displays esterase activity towards short chain fatty esters (acyl chain length of up to 8 carbons). Able to hydrolyze triacetylglycerol (triacetin) and tributyrylglycerol (tributyrin), but not trioleylglycerol (triolein) or cholesterol oleate. Negatively regulates MalT activity by antagonizing maltotriose binding. Inhibits MelA galactosidase activity. The chain is Acetyl esterase from Escherichia coli O8 (strain IAI1).